The chain runs to 206 residues: Pyridoxine/pyridoxamine 5'-phosphate oxidase (206 aa).

Residues Arg53–Lys58, Tyr68–Thr69, Lys75, and Gln97 each bind FMN. Residue Lys58 coordinates substrate. 3 residues coordinate substrate: Tyr115, Arg119, and Ser123. FMN-binding positions include Gln132 to Ser133 and Trp177. Position 183-185 (Arg183–His185) interacts with substrate. An FMN-binding site is contributed by Arg187.

Belongs to the pyridoxamine 5'-phosphate oxidase family. Homodimer. FMN is required as a cofactor.

It carries out the reaction pyridoxamine 5'-phosphate + O2 + H2O = pyridoxal 5'-phosphate + H2O2 + NH4(+). The enzyme catalyses pyridoxine 5'-phosphate + O2 = pyridoxal 5'-phosphate + H2O2. It participates in cofactor metabolism; pyridoxal 5'-phosphate salvage; pyridoxal 5'-phosphate from pyridoxamine 5'-phosphate: step 1/1. The protein operates within cofactor metabolism; pyridoxal 5'-phosphate salvage; pyridoxal 5'-phosphate from pyridoxine 5'-phosphate: step 1/1. Functionally, catalyzes the oxidation of either pyridoxine 5'-phosphate (PNP) or pyridoxamine 5'-phosphate (PMP) into pyridoxal 5'-phosphate (PLP). The sequence is that of Pyridoxine/pyridoxamine 5'-phosphate oxidase from Rhizobium etli (strain CIAT 652).